The primary structure comprises 428 residues: 5-methylthioadenosine/S-adenosylhomocysteine deaminase (428 aa).

2 residues coordinate Zn(2+): His-65 and His-67. Residues Glu-94, Arg-158, and His-184 each contribute to the substrate site. His-211 serves as a coordination point for Zn(2+). Positions 214 and 299 each coordinate substrate. Asp-299 contacts Zn(2+).

It belongs to the metallo-dependent hydrolases superfamily. MTA/SAH deaminase family. Zn(2+) serves as cofactor.

The enzyme catalyses S-adenosyl-L-homocysteine + H2O + H(+) = S-inosyl-L-homocysteine + NH4(+). It carries out the reaction S-methyl-5'-thioadenosine + H2O + H(+) = S-methyl-5'-thioinosine + NH4(+). Its function is as follows. Catalyzes the deamination of 5-methylthioadenosine and S-adenosyl-L-homocysteine into 5-methylthioinosine and S-inosyl-L-homocysteine, respectively. Is also able to deaminate adenosine. The sequence is that of 5-methylthioadenosine/S-adenosylhomocysteine deaminase from Moorella thermoacetica (strain ATCC 39073 / JCM 9320).